Consider the following 501-residue polypeptide: L-arabinose isomerase (501 aa).

Positions 306, 333, 350, and 450 each coordinate Mn(2+).

The protein belongs to the arabinose isomerase family. In terms of assembly, homohexamer. Mn(2+) is required as a cofactor.

The enzyme catalyses beta-L-arabinopyranose = L-ribulose. Its pathway is carbohydrate degradation; L-arabinose degradation via L-ribulose; D-xylulose 5-phosphate from L-arabinose (bacterial route): step 1/3. In terms of biological role, catalyzes the conversion of L-arabinose to L-ribulose. The sequence is that of L-arabinose isomerase from Pectobacterium carotovorum subsp. carotovorum (strain PC1).